The sequence spans 217 residues: Adapter protein MecA (217 aa).

Belongs to the MecA family. In terms of assembly, homodimer.

Functionally, enables the recognition and targeting of unfolded and aggregated proteins to the ClpC protease or to other proteins involved in proteolysis. The polypeptide is Adapter protein MecA (Listeria innocua serovar 6a (strain ATCC BAA-680 / CLIP 11262)).